Reading from the N-terminus, the 73-residue chain is Conotoxin CnIIIE (73 aa).

A signal peptide spans methionine 1–alanine 19. Residues leucine 20–glutamine 49 constitute a propeptide that is removed on maturation. 3 cysteine pairs are disulfide-bonded: cysteine 53–cysteine 72, cysteine 54–cysteine 70, and cysteine 60–cysteine 73.

It belongs to the conotoxin M superfamily. Expressed by the venom duct.

The protein resides in the secreted. Functionally, shows a paralytic effect in fish. This Conus consors (Singed cone) protein is Conotoxin CnIIIE.